Consider the following 652-residue polypeptide: Carboxypeptidase Z (652 aa).

The N-terminal stretch at M1–A20 is a signal peptide. The FZ domain occupies T41–P163. Disulfide bonds link C46–C112, C54–C105, C96–C132, C121–C160, and C125–C149. The N-linked (GlcNAc...) asparagine glycan is linked to N60. The region spanning A189–V505 is the Peptidase M14 domain. Residues H251 and E254 each coordinate Zn(2+). N284 carries N-linked (GlcNAc...) asparagine glycosylation. Position 383 (H383) interacts with Zn(2+). E475 acts as the Proton donor/acceptor in catalysis. The tract at residues F594–S628 is disordered.

The protein belongs to the peptidase M14 family. Requires Zn(2+) as cofactor. As to expression, abundantly expressed in the placenta, with low to moderate levels in the brain, lung, thymus and kidney.

The protein localises to the secreted. Its subcellular location is the extracellular space. It localises to the extracellular matrix. Its activity is regulated as follows. Inhibited by 2-mercaptomethyl-3-guanidinoethylthiopropanoic acid (MGTA) and guanidinoethylmercaptosuccinic acid (GEMSA). Inhibited by chelating agents such as EDTA and EGTA. Cleaves substrates with C-terminal arginine residues. Probably modulates the Wnt signaling pathway, by cleaving some undefined protein. May play a role in cleavage during prohormone processing. In Rattus norvegicus (Rat), this protein is Carboxypeptidase Z (Cpz).